Here is a 239-residue protein sequence, read N- to C-terminus: MENQPKLNSSKEIIAFLAERFPLCFVAEGEARPLKIGIFQDIVERIQDEECLSKTQLRSALRLYTSSWRYLYGVKEGAQRVDLDGNSCGELEAEHIEHALQQLTEAKARVQAQRAEQRAKKREAENVAAGEKNERPTAKKPAPRRRANNTEGEKRQPPRPQKRPQQARKPVAKPVQAKPIQAAPIQIVDVSSLKIGQEIKVRVGKSSVDASVLEVAKDGVRVQLPSGLAMIVRAEHLQF.

The interval 107 to 177 (KARVQAQRAE…RKPVAKPVQA (71 aa)) is disordered. Residues 115–137 (AEQRAKKREAENVAAGEKNERPT) are compositionally biased toward basic and acidic residues.

It belongs to the ProQ family.

The protein localises to the cytoplasm. In terms of biological role, RNA chaperone with significant RNA binding, RNA strand exchange and RNA duplexing activities. May regulate ProP activity through an RNA-based, post-transcriptional mechanism. The chain is RNA chaperone ProQ from Photorhabdus laumondii subsp. laumondii (strain DSM 15139 / CIP 105565 / TT01) (Photorhabdus luminescens subsp. laumondii).